The following is a 1103-amino-acid chain: PH, RCC1 and FYVE domains-containing protein 1 (1103 aa).

A PH domain is found at 22–123 (KKGTQLLKYG…IWIGGLKTLI (102 aa)). The interval 144-233 (DASRELTSSS…SSSHGSAADD (90 aa)) is disordered. Low complexity-rich tracts occupy residues 151-169 (SSSPSSSSASASRGHSSPG) and 217-231 (SVSSAQSSSSHGSAA). 7 RCC1 repeats span residues 237-298 (LGDV…FVTR), 299-351 (QGEI…AVTL), 353-406 (GELY…LITS), 407-458 (YGRL…AVVE), 471-522 (SGKL…GLTT), 524-574 (GQVF…ALTS), and 575-626 (RNEV…AICL). The segment at 632–694 (GAEQSQCSTC…VCDSCYVKLS (63 aa)) adopts an FYVE-type zinc-finger fold. The Zn(2+) site is built by Cys-638, Cys-641, Cys-654, Cys-657, Cys-662, Cys-665, Cys-686, and Cys-689. The tract at residues 783 to 818 (ATPKLAQAPSGISSRSVSPFSRRSSPPRSATPMPST) is disordered. Positions 791-818 (PSGISSRSVSPFSRRSSPPRSATPMPST) are enriched in low complexity. Residues 828–904 (ADNMKKTNEI…IAQLKDVAEK (77 aa)) are a coiled coil. The span at 962–979 (NLQSPKQTPRASERNSNA) shows a compositional bias: polar residues. The disordered stretch occupies residues 962 to 988 (NLQSPKQTPRASERNSNAYPADPRLSS). Residues 1023–1078 (AEWIEQYEPGVYITLVALHDGTRDLRRVRFSRRRFGEHQAETWWSENREKVYEKYN) form the BRX domain. The tract at residues 1079–1103 (VRVSEKSTASQTHRDRDEEEEDIPH) is disordered.

In terms of tissue distribution, mostly expressed in flowers, and, to a lower extent, in stems, leaves, siliques, seeds.

In terms of biological role, binds to phosphatidic acid and to phosphoinositides such as PtdIns3P, PtdIns(3,4)P(2), PtdIns(3,4,5)P(3) and PtdIns(4,5)P(2). Catalyzes guanine nucleotide exchange on specific Rab proteins. In Arabidopsis thaliana (Mouse-ear cress), this protein is PH, RCC1 and FYVE domains-containing protein 1.